Here is a 372-residue protein sequence, read N- to C-terminus: Rab9 effector protein with kelch motifs (372 aa).

Kelch repeat units follow at residues Lys49–Ser95, Ser100–Ala146, Gln151–Thr203, Lys204–Ala250, and His254–Trp303. A disordered region spans residues Ser309–Glu341. The span at Arg321–Glu330 shows a compositional bias: basic and acidic residues. A Kelch 6 repeat occupies Leu349–Asp372.

Interacts with PIKFYVE; the interaction recruits RABEPK to the endosomal membrane. Interacts with RAB9 in its GTP-bound conformation. In terms of processing, phosphorylated on Ser residues by PIKFYVE.

It is found in the cytoplasm. Its subcellular location is the endosome membrane. Its function is as follows. Rab9 effector required for endosome to trans-Golgi network (TGN) transport. The sequence is that of Rab9 effector protein with kelch motifs (RABEPK) from Bos taurus (Bovine).